Here is a 371-residue protein sequence, read N- to C-terminus: Glutamate 5-kinase (371 aa).

Lys11 serves as a coordination point for ATP. Substrate contacts are provided by Ser52, Asp139, and Asn151. ATP is bound by residues 171 to 172 (TD) and 213 to 219 (TGGMATK). Residues 278–356 (EGSLTLDEGA…AEIPRILGYE (79 aa)) enclose the PUA domain.

The protein belongs to the glutamate 5-kinase family.

It is found in the cytoplasm. It catalyses the reaction L-glutamate + ATP = L-glutamyl 5-phosphate + ADP. It functions in the pathway amino-acid biosynthesis; L-proline biosynthesis; L-glutamate 5-semialdehyde from L-glutamate: step 1/2. Catalyzes the transfer of a phosphate group to glutamate to form L-glutamate 5-phosphate. This chain is Glutamate 5-kinase, found in Synechococcus sp. (strain JA-2-3B'a(2-13)) (Cyanobacteria bacterium Yellowstone B-Prime).